A 271-amino-acid chain; its full sequence is Formamidopyrimidine-DNA glycosylase (271 aa).

Pro-2 (schiff-base intermediate with DNA) is an active-site residue. The active-site Proton donor is Glu-3. Catalysis depends on Lys-57, which acts as the Proton donor; for beta-elimination activity. Residues His-90, Arg-109, and Arg-151 each contribute to the DNA site. The segment at Met-236–Gln-270 adopts an FPG-type zinc-finger fold. Arg-260 (proton donor; for delta-elimination activity) is an active-site residue.

This sequence belongs to the FPG family. As to quaternary structure, monomer. The cofactor is Zn(2+).

It carries out the reaction Hydrolysis of DNA containing ring-opened 7-methylguanine residues, releasing 2,6-diamino-4-hydroxy-5-(N-methyl)formamidopyrimidine.. The enzyme catalyses 2'-deoxyribonucleotide-(2'-deoxyribose 5'-phosphate)-2'-deoxyribonucleotide-DNA = a 3'-end 2'-deoxyribonucleotide-(2,3-dehydro-2,3-deoxyribose 5'-phosphate)-DNA + a 5'-end 5'-phospho-2'-deoxyribonucleoside-DNA + H(+). Its function is as follows. Involved in base excision repair of DNA damaged by oxidation or by mutagenic agents. Acts as a DNA glycosylase that recognizes and removes damaged bases. Has a preference for oxidized purines, such as 7,8-dihydro-8-oxoguanine (8-oxoG). Has AP (apurinic/apyrimidinic) lyase activity and introduces nicks in the DNA strand. Cleaves the DNA backbone by beta-delta elimination to generate a single-strand break at the site of the removed base with both 3'- and 5'-phosphates. This is Formamidopyrimidine-DNA glycosylase from Colwellia psychrerythraea (strain 34H / ATCC BAA-681) (Vibrio psychroerythus).